We begin with the raw amino-acid sequence, 302 residues long: Sulfate adenylyltransferase subunit 2 (302 aa).

This sequence belongs to the PAPS reductase family. CysD subfamily. As to quaternary structure, heterodimer composed of CysD, the smaller subunit, and CysN.

The enzyme catalyses sulfate + ATP + H(+) = adenosine 5'-phosphosulfate + diphosphate. The protein operates within sulfur metabolism; hydrogen sulfide biosynthesis; sulfite from sulfate: step 1/3. Functionally, with CysN forms the ATP sulfurylase (ATPS) that catalyzes the adenylation of sulfate producing adenosine 5'-phosphosulfate (APS) and diphosphate, the first enzymatic step in sulfur assimilation pathway. APS synthesis involves the formation of a high-energy phosphoric-sulfuric acid anhydride bond driven by GTP hydrolysis by CysN coupled to ATP hydrolysis by CysD. This Salmonella agona (strain SL483) protein is Sulfate adenylyltransferase subunit 2.